The chain runs to 187 residues: Ribosome-recycling factor (187 aa).

The protein belongs to the RRF family.

Its subcellular location is the cytoplasm. Functionally, responsible for the release of ribosomes from messenger RNA at the termination of protein biosynthesis. May increase the efficiency of translation by recycling ribosomes from one round of translation to another. In Rhodopseudomonas palustris (strain BisB5), this protein is Ribosome-recycling factor.